The following is a 378-amino-acid chain: Probable methyltransferase At1g29790 (378 aa).

The Cytoplasmic segment spans residues 1–6 (MAGFTM). A helical; Signal-anchor for type II membrane protein transmembrane segment spans residues 7 to 29 (SLNLLLLVAMVATNILSLYHLSS). Topologically, residues 30–378 (TTNFFQSTVK…TALLQKPVAR (349 aa)) are lumenal. The interval 67 to 87 (TTHQPDKSTSTSTSRAAVSSS) is disordered. A compositionally biased stretch (low complexity) spans 74–87 (STSTSTSRAAVSSS). Asparagine 247 carries N-linked (GlcNAc...) asparagine glycosylation.

This sequence belongs to the methyltransferase superfamily.

The protein localises to the golgi apparatus membrane. This Arabidopsis thaliana (Mouse-ear cress) protein is Probable methyltransferase At1g29790.